A 72-amino-acid polypeptide reads, in one-letter code: Translation initiation factor IF-1 (72 aa).

The S1-like domain occupies 1–72 (MTKEEVLEFP…TKGRITYRFK (72 aa)).

This sequence belongs to the IF-1 family. Component of the 30S ribosomal translation pre-initiation complex which assembles on the 30S ribosome in the order IF-2 and IF-3, IF-1 and N-formylmethionyl-tRNA(fMet); mRNA recruitment can occur at any time during PIC assembly.

It localises to the cytoplasm. Its function is as follows. One of the essential components for the initiation of protein synthesis. Stabilizes the binding of IF-2 and IF-3 on the 30S subunit to which N-formylmethionyl-tRNA(fMet) subsequently binds. Helps modulate mRNA selection, yielding the 30S pre-initiation complex (PIC). Upon addition of the 50S ribosomal subunit IF-1, IF-2 and IF-3 are released leaving the mature 70S translation initiation complex. The sequence is that of Translation initiation factor IF-1 from Agrobacterium fabrum (strain C58 / ATCC 33970) (Agrobacterium tumefaciens (strain C58)).